Reading from the N-terminus, the 420-residue chain is UDP-N-acetylglucosamine 1-carboxyvinyltransferase 2 (420 aa).

Lysine 22–asparagine 23 provides a ligand contact to phosphoenolpyruvate. Arginine 92 is a binding site for UDP-N-acetyl-alpha-D-glucosamine. Catalysis depends on cysteine 116, which acts as the Proton donor. The residue at position 116 (cysteine 116) is a 2-(S-cysteinyl)pyruvic acid O-phosphothioketal. UDP-N-acetyl-alpha-D-glucosamine contacts are provided by residues arginine 121–leucine 125, aspartate 307, and isoleucine 329.

Belongs to the EPSP synthase family. MurA subfamily.

It localises to the cytoplasm. The catalysed reaction is phosphoenolpyruvate + UDP-N-acetyl-alpha-D-glucosamine = UDP-N-acetyl-3-O-(1-carboxyvinyl)-alpha-D-glucosamine + phosphate. It participates in cell wall biogenesis; peptidoglycan biosynthesis. Cell wall formation. Adds enolpyruvyl to UDP-N-acetylglucosamine. In Streptococcus thermophilus (strain ATCC BAA-250 / LMG 18311), this protein is UDP-N-acetylglucosamine 1-carboxyvinyltransferase 2.